We begin with the raw amino-acid sequence, 436 residues long: Ribosomal protein uS12 methylthiotransferase RimO (436 aa).

Residues 2 to 117 (RNVGIISLGC…IVDVIEEVKK (116 aa)) form the MTTase N-terminal domain. The [4Fe-4S] cluster site is built by Cys11, Cys47, Cys80, Cys154, Cys158, and Cys161. The Radical SAM core domain occupies 140–369 (TTPPYYAYLK…MEIQKQISYE (230 aa)). In terms of domain architecture, TRAM spans 372–436 (MSKIGTKLEV…AFEYDLVGEY (65 aa)).

It belongs to the methylthiotransferase family. RimO subfamily. It depends on [4Fe-4S] cluster as a cofactor.

Its subcellular location is the cytoplasm. The enzyme catalyses L-aspartate(89)-[ribosomal protein uS12]-hydrogen + (sulfur carrier)-SH + AH2 + 2 S-adenosyl-L-methionine = 3-methylsulfanyl-L-aspartate(89)-[ribosomal protein uS12]-hydrogen + (sulfur carrier)-H + 5'-deoxyadenosine + L-methionine + A + S-adenosyl-L-homocysteine + 2 H(+). In terms of biological role, catalyzes the methylthiolation of an aspartic acid residue of ribosomal protein uS12. This is Ribosomal protein uS12 methylthiotransferase RimO from Caldanaerobacter subterraneus subsp. tengcongensis (strain DSM 15242 / JCM 11007 / NBRC 100824 / MB4) (Thermoanaerobacter tengcongensis).